We begin with the raw amino-acid sequence, 475 residues long: Ribulose bisphosphate carboxylase large chain (475 aa).

The propeptide occupies 1 to 2; that stretch reads MS. Pro-3 bears the N-acetylproline mark. N6,N6,N6-trimethyllysine is present on Lys-14. Substrate is bound by residues Asn-123 and Thr-173. The Proton acceptor role is filled by Lys-175. Residue Lys-177 coordinates substrate. Lys-201, Asp-203, and Glu-204 together coordinate Mg(2+). Lys-201 carries the N6-carboxylysine modification. The active-site Proton acceptor is the His-294. Arg-295, His-327, and Ser-379 together coordinate substrate.

It belongs to the RuBisCO large chain family. Type I subfamily. Heterohexadecamer of 8 large chains and 8 small chains; disulfide-linked. The disulfide link is formed within the large subunit homodimers. It depends on Mg(2+) as a cofactor. Post-translationally, the disulfide bond which can form in the large chain dimeric partners within the hexadecamer appears to be associated with oxidative stress and protein turnover.

The protein resides in the plastid. Its subcellular location is the chloroplast. It catalyses the reaction 2 (2R)-3-phosphoglycerate + 2 H(+) = D-ribulose 1,5-bisphosphate + CO2 + H2O. It carries out the reaction D-ribulose 1,5-bisphosphate + O2 = 2-phosphoglycolate + (2R)-3-phosphoglycerate + 2 H(+). Functionally, ruBisCO catalyzes two reactions: the carboxylation of D-ribulose 1,5-bisphosphate, the primary event in carbon dioxide fixation, as well as the oxidative fragmentation of the pentose substrate in the photorespiration process. Both reactions occur simultaneously and in competition at the same active site. This Clarkia xantiana (Gunsight clarkia) protein is Ribulose bisphosphate carboxylase large chain.